Consider the following 117-residue polypeptide: Large ribosomal subunit protein uL18 (117 aa).

The protein belongs to the universal ribosomal protein uL18 family. As to quaternary structure, part of the 50S ribosomal subunit; part of the 5S rRNA/L5/L18/L25 subcomplex. Contacts the 5S and 23S rRNAs.

Functionally, this is one of the proteins that bind and probably mediate the attachment of the 5S RNA into the large ribosomal subunit, where it forms part of the central protuberance. The protein is Large ribosomal subunit protein uL18 of Edwardsiella ictaluri (strain 93-146).